The chain runs to 100 residues: MITLTHYLILSAILFSIALVGILRRKNLLMLFFATEIALNAVNIALAAFSKYYGDLTGQLFAFFIIAIAASEVAVGLGLLIIWYKRRGTIDLDSLQSMNG.

Transmembrane regions (helical) follow at residues 2 to 22 (ITLT…LVGI), 29 to 49 (LMLF…LAAF), and 63 to 83 (FFII…LIIW).

This sequence belongs to the complex I subunit 4L family. NDH-1 is composed of 14 different subunits. Subunits NuoA, H, J, K, L, M, N constitute the membrane sector of the complex.

It localises to the cell inner membrane. It catalyses the reaction a quinone + NADH + 5 H(+)(in) = a quinol + NAD(+) + 4 H(+)(out). In terms of biological role, NDH-1 shuttles electrons from NADH, via FMN and iron-sulfur (Fe-S) centers, to quinones in the respiratory chain. The immediate electron acceptor for the enzyme in this species is believed to be ubiquinone. Couples the redox reaction to proton translocation (for every two electrons transferred, four hydrogen ions are translocated across the cytoplasmic membrane), and thus conserves the redox energy in a proton gradient. The sequence is that of NADH-quinone oxidoreductase subunit K from Nitratiruptor sp. (strain SB155-2).